The sequence spans 318 residues: L-malyl-CoA/beta-methylmalyl-CoA lyase (318 aa).

Positions 19, 24, 30, and 76 each coordinate substrate. 2 residues coordinate Mg(2+): glutamate 141 and aspartate 168. Substrate is bound by residues alanine 167–aspartate 168 and isoleucine 251–histidine 252.

Belongs to the HpcH/HpaI aldolase family. As to quaternary structure, homohexamer. Dimer of trimers. Mg(2+) is required as a cofactor. Mn(2+) serves as cofactor.

It catalyses the reaction (S)-malyl-CoA = glyoxylate + acetyl-CoA. The enzyme catalyses (2R,3S)-beta-methylmalyl-CoA = propanoyl-CoA + glyoxylate. In terms of biological role, involved in the ethylmalonyl-CoA pathway for acetate assimilation. Catalyzes the reversible condensation of glyoxylate and acetyl-CoA to L-malyl-CoA and the reversible condensation of glyoxylate and propionyl-CoA to yield beta-methylmalyl-CoA. The polypeptide is L-malyl-CoA/beta-methylmalyl-CoA lyase (Cereibacter sphaeroides (strain ATCC 17025 / ATH 2.4.3) (Rhodobacter sphaeroides)).